The primary structure comprises 100 residues: uncharacterized protein (100 aa).

Positions 8 to 100 (MKQSDDQIRA…TYLPGFLETL (93 aa)) constitute an HTH arsR-type domain. A DNA-binding region (H-T-H motif) is located at residues 44 to 67 (CGEVGEKCNIVKTTASYHFKTLRE).

This is an uncharacterized protein from Bacillus subtilis (strain 168).